The following is a 608-amino-acid chain: Glutamyl-tRNA(Gln) amidotransferase subunit E (608 aa).

The protein belongs to the GatB/GatE family. GatE subfamily. In terms of assembly, heterodimer of GatD and GatE.

It carries out the reaction L-glutamyl-tRNA(Gln) + L-glutamine + ATP + H2O = L-glutaminyl-tRNA(Gln) + L-glutamate + ADP + phosphate + H(+). Its function is as follows. Allows the formation of correctly charged Gln-tRNA(Gln) through the transamidation of misacylated Glu-tRNA(Gln) in organisms which lack glutaminyl-tRNA synthetase. The reaction takes place in the presence of glutamine and ATP through an activated gamma-phospho-Glu-tRNA(Gln). The GatDE system is specific for glutamate and does not act on aspartate. The polypeptide is Glutamyl-tRNA(Gln) amidotransferase subunit E (Pyrobaculum aerophilum (strain ATCC 51768 / DSM 7523 / JCM 9630 / CIP 104966 / NBRC 100827 / IM2)).